Here is a 452-residue protein sequence, read N- to C-terminus: Tripartite motif-containing protein 49 (452 aa).

Residues Cys-15–Thr-56 form an RING-type zinc finger. Residues Ser-88–Ile-129 form a B box-type zinc finger. The Zn(2+) site is built by Cys-93, His-96, Cys-115, and His-121. The B30.2/SPRY domain maps to Glu-269 to Phe-452.

Belongs to the TRIM/RBCC family. As to expression, preferentially expressed in testis.

The sequence is that of Tripartite motif-containing protein 49 (TRIM49) from Homo sapiens (Human).